Here is a 294-residue protein sequence, read N- to C-terminus: 4-hydroxy-tetrahydrodipicolinate synthase (294 aa).

T45 contributes to the pyruvate binding site. Y133 acts as the Proton donor/acceptor in catalysis. K161 acts as the Schiff-base intermediate with substrate in catalysis. I203 provides a ligand contact to pyruvate.

This sequence belongs to the DapA family. Homotetramer; dimer of dimers.

Its subcellular location is the cytoplasm. It catalyses the reaction L-aspartate 4-semialdehyde + pyruvate = (2S,4S)-4-hydroxy-2,3,4,5-tetrahydrodipicolinate + H2O + H(+). It participates in amino-acid biosynthesis; L-lysine biosynthesis via DAP pathway; (S)-tetrahydrodipicolinate from L-aspartate: step 3/4. Functionally, catalyzes the condensation of (S)-aspartate-beta-semialdehyde [(S)-ASA] and pyruvate to 4-hydroxy-tetrahydrodipicolinate (HTPA). In Shewanella pealeana (strain ATCC 700345 / ANG-SQ1), this protein is 4-hydroxy-tetrahydrodipicolinate synthase.